Reading from the N-terminus, the 261-residue chain is Cytochrome c oxidase subunit 3 (261 aa).

Residues 1–15 (MAHQSHAYHMVKPSP) lie on the Mitochondrial matrix side of the membrane. A helical transmembrane segment spans residues 16 to 34 (WPLTGALSALLTTSGLTMW). The Mitochondrial intermembrane portion of the chain corresponds to 35–40 (FHFHST). Residues 41-66 (TLLLTGLLTNALTMYQWWRDVVREST) form a helical membrane-spanning segment. Residues 67–72 (YQGHHT) are Mitochondrial matrix-facing. A helical transmembrane segment spans residues 73–105 (LPVQKGLRYGMILFITSEVFFFAGFFWAFYHSS). The Mitochondrial intermembrane portion of the chain corresponds to 106–128 (LAPTPQLGGHWPPTGIIPLNPLE). A helical transmembrane segment spans residues 129–152 (VPLLNTSVLLASGVSITWAHHSLM). The Mitochondrial matrix portion of the chain corresponds to 153 to 155 (ENN). Residues 156-183 (RTQMIQALLITILLGIYFTLLQASEYIE) traverse the membrane as a helical segment. The Mitochondrial intermembrane portion of the chain corresponds to 184–190 (APFTISD). A helical transmembrane segment spans residues 191 to 223 (GIYGSTFFMATGFHGLHVIIGSTFLTVCLARQL). Residues 224-232 (LFHFTSKHH) lie on the Mitochondrial matrix side of the membrane. A helical membrane pass occupies residues 233–256 (FGFEAAAWYWHFVDVVWLFLYVSI). The Mitochondrial intermembrane portion of the chain corresponds to 257–261 (YWWGS).

This sequence belongs to the cytochrome c oxidase subunit 3 family. As to quaternary structure, component of the cytochrome c oxidase (complex IV, CIV), a multisubunit enzyme composed of 14 subunits. The complex is composed of a catalytic core of 3 subunits MT-CO1, MT-CO2 and MT-CO3, encoded in the mitochondrial DNA, and 11 supernumerary subunits COX4I, COX5A, COX5B, COX6A, COX6B, COX6C, COX7A, COX7B, COX7C, COX8 and NDUFA4, which are encoded in the nuclear genome. The complex exists as a monomer or a dimer and forms supercomplexes (SCs) in the inner mitochondrial membrane with NADH-ubiquinone oxidoreductase (complex I, CI) and ubiquinol-cytochrome c oxidoreductase (cytochrome b-c1 complex, complex III, CIII), resulting in different assemblies (supercomplex SCI(1)III(2)IV(1) and megacomplex MCI(2)III(2)IV(2)).

The protein resides in the mitochondrion inner membrane. It carries out the reaction 4 Fe(II)-[cytochrome c] + O2 + 8 H(+)(in) = 4 Fe(III)-[cytochrome c] + 2 H2O + 4 H(+)(out). In terms of biological role, component of the cytochrome c oxidase, the last enzyme in the mitochondrial electron transport chain which drives oxidative phosphorylation. The respiratory chain contains 3 multisubunit complexes succinate dehydrogenase (complex II, CII), ubiquinol-cytochrome c oxidoreductase (cytochrome b-c1 complex, complex III, CIII) and cytochrome c oxidase (complex IV, CIV), that cooperate to transfer electrons derived from NADH and succinate to molecular oxygen, creating an electrochemical gradient over the inner membrane that drives transmembrane transport and the ATP synthase. Cytochrome c oxidase is the component of the respiratory chain that catalyzes the reduction of oxygen to water. Electrons originating from reduced cytochrome c in the intermembrane space (IMS) are transferred via the dinuclear copper A center (CU(A)) of subunit 2 and heme A of subunit 1 to the active site in subunit 1, a binuclear center (BNC) formed by heme A3 and copper B (CU(B)). The BNC reduces molecular oxygen to 2 water molecules using 4 electrons from cytochrome c in the IMS and 4 protons from the mitochondrial matrix. The polypeptide is Cytochrome c oxidase subunit 3 (MT-CO3) (Pongo abelii (Sumatran orangutan)).